The primary structure comprises 219 residues: Small ribosomal subunit protein uS3c (219 aa).

Residues 43 to 118 (IKNYVQNNMI…KLNITITRIE (76 aa)) form the KH type-2 domain.

The protein belongs to the universal ribosomal protein uS3 family. Part of the 30S ribosomal subunit.

The protein localises to the plastid. This chain is Small ribosomal subunit protein uS3c (rps3), found in Cuscuta exaltata (Tall dodder).